The sequence spans 167 residues: uncharacterized protein (167 aa).

The helical transmembrane segment at 39–59 threads the bilayer; that stretch reads LSLFSLSPLFLLLSISSLIFS. A coiled-coil region spans residues 92–122; it reads LGTQIEMITQAMTTLESRVTDLQQESNDHRT. Residues 134–167 are disordered; it reads RDLGDENRPKPTTNKMIATGEQHKGEVSTSLFHD. A compositionally biased stretch (basic and acidic residues) spans 154 to 167; sequence EQHKGEVSTSLFHD.

Its subcellular location is the mitochondrion membrane. This is an uncharacterized protein from Arabidopsis thaliana (Mouse-ear cress).